A 98-amino-acid chain; its full sequence is Large ribosomal subunit protein bL28 (98 aa).

It belongs to the bacterial ribosomal protein bL28 family.

The chain is Large ribosomal subunit protein bL28 from Mesorhizobium japonicum (strain LMG 29417 / CECT 9101 / MAFF 303099) (Mesorhizobium loti (strain MAFF 303099)).